The following is a 413-amino-acid chain: Peptidase T (413 aa).

His84 serves as a coordination point for Zn(2+). Asp86 is an active-site residue. Asp147 contributes to the Zn(2+) binding site. The Proton acceptor role is filled by Glu181. The Zn(2+) site is built by Glu182, Asp204, and His386.

Belongs to the peptidase M20B family. The cofactor is Zn(2+).

The protein resides in the cytoplasm. The enzyme catalyses Release of the N-terminal residue from a tripeptide.. In terms of biological role, cleaves the N-terminal amino acid of tripeptides. The chain is Peptidase T from Ligilactobacillus salivarius (strain UCC118) (Lactobacillus salivarius).